The following is a 174-amino-acid chain: Mating-type protein ALPHA2 (174 aa).

Residues 108–170 (QPYRGHRFTK…NRRRKQKHPP (63 aa)) constitute a DNA-binding region (homeobox; TALE-type).

It belongs to the TALE/M-ATYP homeobox family. In terms of assembly, forms a heterodimer with A1.

The protein resides in the nucleus. Functionally, mating type proteins are sequence specific DNA-binding proteins that act as master switches in yeast differentiation by controlling gene expression in a cell type-specific fashion. Transcriptional corepressor that acts in conjunction with A1 to repress transcription of haploid-specific genes and of MATALPHA1. In Nakaseomyces delphensis (Yeast), this protein is Mating-type protein ALPHA2 (MATALPHA2).